The primary structure comprises 78 residues: Large ribosomal subunit protein bL28 (78 aa).

Belongs to the bacterial ribosomal protein bL28 family.

The sequence is that of Large ribosomal subunit protein bL28 from Flavobacterium johnsoniae (strain ATCC 17061 / DSM 2064 / JCM 8514 / BCRC 14874 / CCUG 350202 / NBRC 14942 / NCIMB 11054 / UW101) (Cytophaga johnsonae).